Here is a 150-residue protein sequence, read N- to C-terminus: FAD synthase (150 aa).

ATP is bound by residues Thr20–Phe21, His25–His28, and Asp103.

This sequence belongs to the archaeal FAD synthase family. As to quaternary structure, homodimer. Requires a divalent metal cation as cofactor.

It catalyses the reaction FMN + ATP + H(+) = FAD + diphosphate. It functions in the pathway cofactor biosynthesis; FAD biosynthesis; FAD from FMN: step 1/1. Functionally, catalyzes the transfer of the AMP portion of ATP to flavin mononucleotide (FMN) to produce flavin adenine dinucleotide (FAD) coenzyme. The polypeptide is FAD synthase (Methanohalobium evestigatum (strain ATCC BAA-1072 / DSM 3721 / NBRC 107634 / OCM 161 / Z-7303)).